We begin with the raw amino-acid sequence, 705 residues long: MNPVIKKFQYGNDTITLETGRIARQATGAVLASMGKTSVLCTVVGAKEASPGQDFFPLSVHYQEKAYAAGKIPGGFFKREGRPSEKETLTSRLIDRPIRPLFPDGFVNEVQVVCTVVAAEKDVDPDICAMIGTSAALAISGIPFNGPIGAARVGYTQADGYLLNPTYQALASSELDMVVAGTQDAVLMVESEANELPEDIMLGAVLYAHQEMQAVVQAVNELAKDAGKPTWDWQPEAVNQALVDALKADFEESIGVAYRITDKQKRYDRLSELRSQAVAQLAGEGSDISQDDVKKVFGKLEKNIVRSRVVAGEPRIDGRDTKTVRPLQVEVGVLPKVHGSALFTRGETQALVVATLGSARDAQIIDALEGEHRDNFMLHYNFPPYSVGECGRMGATGRREIGHGRLARRGVAAMLPKEDQFPYTMRVVSEITESNGSSSMASVCGSSLALMDAGVPLKAPVAGIAMGLVKEENGFAVLTDILGDEDHLGDMDFKVAGTANGVTALQMDIKIEGITEEIMETALEQALHARLHILSEMNAVIAQPRESLSDNAPQFHTMKVDPEKIRDIIGKGGATIRSITEETGASIDIDDDGTVKIYGDDGDSLQGAINRIEEITAEAEIGEVYKGKVVRIVDFGAFVNFLPGKDGLVHISQIAHERVQNVTDYLKEGQEVDVKCMDIDQRGRIKLSIKELLPQPEETGGSDAE.

D486 and D492 together coordinate Mg(2+). One can recognise a KH domain in the interval 553–612 (PQFHTMKVDPEKIRDIIGKGGATIRSITEETGASIDIDDDGTVKIYGDDGDSLQGAINRI). In terms of domain architecture, S1 motif spans 622 to 690 (GEVYKGKVVR…QRGRIKLSIK (69 aa)).

Belongs to the polyribonucleotide nucleotidyltransferase family. As to quaternary structure, component of the RNA degradosome, which is a multiprotein complex involved in RNA processing and mRNA degradation. Mg(2+) serves as cofactor.

The protein localises to the cytoplasm. It carries out the reaction RNA(n+1) + phosphate = RNA(n) + a ribonucleoside 5'-diphosphate. Involved in mRNA degradation. Catalyzes the phosphorolysis of single-stranded polyribonucleotides processively in the 3'- to 5'-direction. In Teredinibacter turnerae (strain ATCC 39867 / T7901), this protein is Polyribonucleotide nucleotidyltransferase.